Here is a 2150-residue protein sequence, read N- to C-terminus: MRSIGGSFHLLQPVVAALILLVVCLVYALQSGSGTISEFSSDVLFSRAKYSGVPVHHSRWRQDAGIHVIDSHHIVRRDSYGRRGKRDVTSTDRRRRLQGVARDCGHACHLRLRSDDAVYIVHLHRWNQIPDSHNKSVPHFSNSNFAPMVLYLDSEEEVRGGMSRTDPDCIYRAHVKGVHQHSIVNLCDSEDGLYGMLALPSGIHTVEPIISGNGTEHDGASRHRQHLVRKFDPMHFKSFDHLNSTSVNETETTVATWQDQWEDVIERKARSRRAANSWDHYVEVLVVADTKMYEYHGRSLEDYVLTLFSTVASIYRHQSLRASINVVVVKLIVLKTENAGPRITQNAQQTLQDFCRWQQYYNDPDDSSVQHHDVAILLTRKDICRSQGKCDTLGLAELGTMCDMQKSCAIIEDNGLSAAFTIAHELGHVFSIPHDDERKCSTYMPVNKNNFHIMAPTLEYNTHPWSWSPCSAGMLERFLENNRGQTQCLFDQPVERRYYEDVFVRDEPGKKYDAHQQCKFVFGPASELCPYMPTCRRLWCATFYGSQMGCRTQHMPWADGTPCDESRSMFCHHGACVRLAPESLTKIDGQWGDWRSWGECSRTCGGGVQKGLRDCDSPKPRNGGKYCVGQRERYRSCNTQECPWDTQPYREVQCSEFNNKDIGIQGVASTNTHWVPKYANVAPNERCKLYCRLSGSAAFYLLRDKVVDGTPCDRNGDDICVAGACMPAGCDHQLHSTLRRDKCGVCGGDDSSCKVVKGTFNEQGTFGYNEVMKIPAGSANIDIRQKGYNNMKEDDNYLSLRAANGEFLLNGHFQVSLARQQIAFQDTVLEYSGSDAIIERINGTGPIRSDIYVHVLSVGSHPPDISYEYMTAAVPNAVIRPISSALYLWRVTDTWTECDRACRGQQSQKLMCLDMSTHRQSHDRNCQNVLKPKQATRMCNIDCSTRWITEDVSSCSAKCGSGQKRQRVSCVKMEGDRQTPASEHLCDRNSKPSDIASCYIDCSGRKWNYGEWTSCSETCGSNGKMHRKSYCVDDSNRRVDESLCGREQKEATERECNRIPCPRWVYGHWSECSRSCDGGVKMRHAQCLDAADRETHTSRCGPAQTQEHCNEHACTWWQFGVWSDCSAKCGDGVQYRDANCTDRHRSVLPEHRCLKMEKIITKPCHRESCPKYKLGEWSQCSVSCEDGWSSRRVSCVSGNGTEVDMSLCGTASDRPASHQTCNLGTCPFWRNTDWSACSVSCGIGHRERTTECIYREQSVDASFCGDTKMPETSQTCHLLPCTSWKPSHWSPCSVTCGSGIQTRSVSCTRGSEGTIVDEYFCDRNTRPRLKKTCEKDTCDGPRVLQKLQADVPPIRWATGPWTACSATCGNGTQRRLLKCRDHVRDLPDEYCNHLDKEVSTRNCRLRDCSYWKMAEWEECPATCGTHVQQSRNVTCVSAEDGGRTILKDVDCDVQKRPTSARNCRLEPCPKGEEHIGSWIIGDWSKCSASCGGGWRRRSVSCTSSSCDETRKPKMFDKCNEELCPPLTNNSWQISPWTHCSVSCGGGVQRRKIWCEDVLSGRKQDDIECSEIKPREQRDCEMPPCRSHYHNKTSSASMTSLSSSNSNTTSSASASSLPILPPVVSWQTSAWSACSAKCGRGTKRRVVECVNPSLNVTVASTECDQTKKPVEEVRCRTKHCPRWKTTTWSSCSVTCGRGIRRREVQCYRGRKNLVSDSECNPKTKLNSVANCFPVACPAYRWNVTPWSKCKDECARGQKQTRRVHCISTSGKRAAPRMCELARAPTSIRECDTSNCPYEWVPGDWQTCSKSCGEGVQTREVRCRRKINFNSTIPIIFMLEDEPAVPKEKCELFPKPNESQTCELNPCDSEFKWSFGPWGECSKNCGQGIRRRRVKCVANDGRRVERVKCTTKKPRRTQYCFERNCLPSTCQELKSQNVKAKDGNYTILLDGFTIEIYCHRMNSTIPKAYLNVNPRTNFAEVYGKKLIYPHTCPFNGDRNDSCHCSEDGDASAGLTRFNKVRIDLLNRKFHLADYTFAKREYGVHVPYGTAGDCYSMKDCPQGIFSIDLKSAGLKLVDDLNWEDQGHRTSSRIDRFYNNAKVIGHCGGFCGKCSPERYKGLIFEVNTKLLNHVKNGGHIDDELDDDGFSGDMD.

Residues 1–28 form the signal peptide; sequence MRSIGGSFHLLQPVVAALILLVVCLVYA. A propeptide spanning residues 29-273 is cleaved from the precursor; sequence LQSGSGTISE…VIERKARSRR (245 aa). Residues asparagine 134, asparagine 213, asparagine 243, and asparagine 248 are each glycosylated (N-linked (GlcNAc...) asparagine). A Peptidase M12B domain is found at 280–493; sequence HYVEVLVVAD…GQTQCLFDQP (214 aa). Disulfide bonds link cysteine 402/cysteine 488 and cysteine 440/cysteine 470. Histidine 424 serves as a coordination point for Zn(2+). Residue glutamate 425 is part of the active site. Zn(2+) contacts are provided by histidine 428 and histidine 434. The 85-residue stretch at 503-587 folds into the Disintegrin domain; the sequence is FVRDEPGKKY…RLAPESLTKI (85 aa). A TSP type-1 1 domain is found at 588–643; it reads DGQWGDWRSWGECSRTCGGGVQKGLRDCDSPKPRNGGKYCVGQRERYRSCNTQECP. 3 cysteine pairs are disulfide-bonded: cysteine 600–cysteine 637, cysteine 604–cysteine 642, and cysteine 615–cysteine 627. A glycan (N-linked (GlcNAc...) asparagine) is linked at asparagine 842. 11 TSP type-1 domains span residues 943-1003, 1004-1057, 1060-1115, 1116-1165, 1168-1227, 1228-1277, 1280-1339, 1352-1409, 1410-1469, 1474-1524, and 1527-1585; these read CSTR…IDCS, GRKW…RECN, PCPR…HACT, WWQF…KPCH, SCPK…GTCP, FWRN…QTCH, PCTS…DTCD, PPIR…RDCS, YWKM…EPCP, HIGS…ELCP, and TNNS…PPCR. Residues asparagine 1139 and asparagine 1199 are each glycosylated (N-linked (GlcNAc...) asparagine). Asparagine 1370 and asparagine 1432 each carry an N-linked (GlcNAc...) asparagine glycan. N-linked (GlcNAc...) asparagine glycosylation is found at asparagine 1528, asparagine 1590, asparagine 1606, and asparagine 1654. Positions 1590 to 1614 are disordered; that stretch reads NKTSSASMTSLSSSNSNTTSSASAS. Low complexity predominate over residues 1592-1614; it reads TSSASMTSLSSSNSNTTSSASAS. 5 TSP type-1 domains span residues 1621–1675, 1678–1736, 1737–1793, 1794–1866, and 1867–1924; these read PVVS…VRCR, HCPR…VACP, AYRW…DTSN, CPYE…NPCD, and SEFK…RNCL. Cystine bridges form between cysteine 1679–cysteine 1718, cysteine 1690–cysteine 1694, cysteine 1690–cysteine 1730, cysteine 1694–cysteine 1735, cysteine 1705–cysteine 1718, and cysteine 1730–cysteine 1735. Asparagine 1828 and asparagine 1855 each carry an N-linked (GlcNAc...) asparagine glycan. The GON domain occupies 1924-2123; that stretch reads LPSTCQELKS…RYKGLIFEVN (200 aa). Residues asparagine 1942, asparagine 1960, and asparagine 1997 are each glycosylated (N-linked (GlcNAc...) asparagine).

Zn(2+) is required as a cofactor. In terms of tissue distribution, expressed by the gonadal distal tip cells (DTCs). Expressed in muscles, including body wall, vulval and anal depressor muscles. Expressed in motor neurons and in ASI and ASJ neurons.

It is found in the secreted. Its subcellular location is the extracellular space. The protein localises to the extracellular matrix. It localises to the basement membrane. The protein resides in the endoplasmic reticulum. It is found in the golgi apparatus. Secreted metalloprotease required for distal tip cell (DTC) migration along the body wall basement membranes, a key step that promotes gonad morphogenesis. Probably acts by remodeling the basement membrane during cell migration. Required to restrict presynaptic growth at the neuromuscular junctions (NMJ) in late larval stage and in adult motor neurons, probably by controlling collagen IV emb-9 degradation, a component of the synapse basement membrane. Also involved in the organization of adult muscle morphology. Has a protease-independent function in promoting the transport from the endoplasmic reticulum to the Golgi apparatus of a variety of secretory cargos. Required for the secretion of insulin-like peptide ins-7, daf-28 and ins-18 and TGF beta-like protein daf-7. In peripheral tissues, negatively regulates insulin-mediated daf-16 translocation and thereby negatively regulates lifespan and dauer formation. This is A disintegrin and metalloproteinase with thrombospondin motifs gon-1 from Caenorhabditis elegans.